Reading from the N-terminus, the 471-residue chain is Glutamate--tRNA ligase (471 aa).

Residues 9-19 (PSPTGYLHVGG) carry the 'HIGH' region motif. Zn(2+) contacts are provided by Cys-98, Cys-100, Cys-125, and Asp-127. Positions 237 to 241 (KLSKR) match the 'KMSKS' region motif. Residue Lys-240 coordinates ATP.

It belongs to the class-I aminoacyl-tRNA synthetase family. Glutamate--tRNA ligase type 1 subfamily. As to quaternary structure, monomer. Requires Zn(2+) as cofactor.

The protein localises to the cytoplasm. The catalysed reaction is tRNA(Glu) + L-glutamate + ATP = L-glutamyl-tRNA(Glu) + AMP + diphosphate. Functionally, catalyzes the attachment of glutamate to tRNA(Glu) in a two-step reaction: glutamate is first activated by ATP to form Glu-AMP and then transferred to the acceptor end of tRNA(Glu). The chain is Glutamate--tRNA ligase from Yersinia pseudotuberculosis serotype O:1b (strain IP 31758).